Consider the following 211-residue polypeptide: 3-demethoxyubiquinol 3-hydroxylase (211 aa).

The Fe cation site is built by Glu60, Glu90, His93, Glu142, Glu174, and His177.

This sequence belongs to the COQ7 family. The cofactor is Fe cation.

Its subcellular location is the cell membrane. The catalysed reaction is a 5-methoxy-2-methyl-3-(all-trans-polyprenyl)benzene-1,4-diol + AH2 + O2 = a 3-demethylubiquinol + A + H2O. The protein operates within cofactor biosynthesis; ubiquinone biosynthesis. Catalyzes the hydroxylation of 2-nonaprenyl-3-methyl-6-methoxy-1,4-benzoquinol during ubiquinone biosynthesis. The chain is 3-demethoxyubiquinol 3-hydroxylase from Francisella tularensis subsp. holarctica (strain FTNF002-00 / FTA).